We begin with the raw amino-acid sequence, 354 residues long: Rhodopsin (354 aa).

Topologically, residues Met1–Lys36 are extracellular. N-linked (GlcNAc...) asparagine glycosylation is found at Asn2 and Asn15. Residues Phe37–Val61 traverse the membrane as a helical segment. Residues Thr62–Asn73 are Cytoplasmic-facing. A helical transmembrane segment spans residues Tyr74–Ile96. Topologically, residues Thr97–Cys110 are extracellular. A disulfide bridge links Cys110 with Cys187. The helical transmembrane segment at Asn111–Ile133 threads the bilayer. Positions Glu134–Tyr136 match the 'Ionic lock' involved in activated form stabilization motif. Residues Glu134–His152 are Cytoplasmic-facing. Residues Ala153 to Val173 form a helical membrane-spanning segment. Over Gly174 to Ser202 the chain is Extracellular. Asn200 carries N-linked (GlcNAc...) asparagine glycosylation. A helical transmembrane segment spans residues Phe203–Gly224. The Cytoplasmic segment spans residues Arg225–Arg252. The helical transmembrane segment at Met253 to Phe274 threads the bilayer. Residues Ile275 to Ile286 lie on the Extracellular side of the membrane. Residues Phe287–Leu308 traverse the membrane as a helical segment. Lys296 carries the post-translational modification N6-(retinylidene)lysine. Over Met309–Ala354 the chain is Cytoplasmic. S-palmitoyl cysteine attachment occurs at residues Cys322 and Cys323. The disordered stretch occupies residues Ser333–Ala354. The segment covering Thr334 to Ala354 has biased composition (low complexity).

The protein belongs to the G-protein coupled receptor 1 family. Opsin subfamily. In terms of processing, phosphorylated on some or all of the serine and threonine residues present in the C-terminal region. Post-translationally, contains one covalently linked retinal chromophore.

Its subcellular location is the membrane. It is found in the cell projection. It localises to the cilium. The protein resides in the photoreceptor outer segment. Functionally, photoreceptor required for image-forming vision at low light intensity. While most salt water fish species use retinal as chromophore, most freshwater fish use 3-dehydroretinal, or a mixture of retinal and 3-dehydroretinal. Light-induced isomerization of 11-cis to all-trans retinal triggers a conformational change that activates signaling via G-proteins. Subsequent receptor phosphorylation mediates displacement of the bound G-protein alpha subunit by arrestin and terminates signaling. The protein is Rhodopsin (rho) of Scyliorhinus canicula (Small-spotted catshark).